Consider the following 325-residue polypeptide: Beta-ketoacyl-[acyl-carrier-protein] synthase III (325 aa).

Active-site residues include cysteine 119 and histidine 252. The tract at residues glutamine 253–arginine 257 is ACP-binding. Asparagine 282 is a catalytic residue.

The protein belongs to the thiolase-like superfamily. FabH family. In terms of assembly, homodimer.

The protein localises to the cytoplasm. It carries out the reaction malonyl-[ACP] + acetyl-CoA + H(+) = 3-oxobutanoyl-[ACP] + CO2 + CoA. Its pathway is lipid metabolism; fatty acid biosynthesis. In terms of biological role, catalyzes the condensation reaction of fatty acid synthesis by the addition to an acyl acceptor of two carbons from malonyl-ACP. Catalyzes the first condensation reaction which initiates fatty acid synthesis and may therefore play a role in governing the total rate of fatty acid production. Possesses both acetoacetyl-ACP synthase and acetyl transacylase activities. Its substrate specificity determines the biosynthesis of branched-chain and/or straight-chain of fatty acids. The protein is Beta-ketoacyl-[acyl-carrier-protein] synthase III of Variovorax paradoxus (strain S110).